The following is a 462-amino-acid chain: Probable serine/threonine-protein kinase DDB_G0286841 (462 aa).

In terms of domain architecture, Protein kinase spans F64–F358. ATP-binding positions include I70–V78 and K93. Residue D188 is the Proton acceptor of the active site. The AGC-kinase C-terminal domain occupies S359–Y462. The span at N414–N439 shows a compositional bias: low complexity. The disordered stretch occupies residues N414–N447.

This sequence belongs to the protein kinase superfamily. AGC Ser/Thr protein kinase family.

The enzyme catalyses L-seryl-[protein] + ATP = O-phospho-L-seryl-[protein] + ADP + H(+). It carries out the reaction L-threonyl-[protein] + ATP = O-phospho-L-threonyl-[protein] + ADP + H(+). This Dictyostelium discoideum (Social amoeba) protein is Probable serine/threonine-protein kinase DDB_G0286841.